Here is a 389-residue protein sequence, read N- to C-terminus: 8-amino-7-oxononanoate synthase (389 aa).

R31 serves as a coordination point for substrate. Pyridoxal 5'-phosphate is bound at residue 109–110; it reads GY. H134 contributes to the substrate binding site. Residues S180, 205–208, and 236–239 contribute to the pyridoxal 5'-phosphate site; these read DEAH and TLSK. At K239 the chain carries N6-(pyridoxal phosphate)lysine. T349 contributes to the substrate binding site.

This sequence belongs to the class-II pyridoxal-phosphate-dependent aminotransferase family. BioF subfamily. As to quaternary structure, homodimer. It depends on pyridoxal 5'-phosphate as a cofactor.

The enzyme catalyses 6-carboxyhexanoyl-[ACP] + L-alanine + H(+) = (8S)-8-amino-7-oxononanoate + holo-[ACP] + CO2. The protein operates within cofactor biosynthesis; biotin biosynthesis. In terms of biological role, catalyzes the decarboxylative condensation of pimeloyl-[acyl-carrier protein] and L-alanine to produce 8-amino-7-oxononanoate (AON), [acyl-carrier protein], and carbon dioxide. In Mycobacterium marinum (strain ATCC BAA-535 / M), this protein is 8-amino-7-oxononanoate synthase.